Consider the following 855-residue polypeptide: Vomeronasal type-2 receptor 26 (855 aa).

The N-terminal stretch at 1–22 (MKLLTAFSPLVVLILFQEQISC) is a signal peptide. Over 23 to 595 (YYLTKYASSG…FLAHEDPLGT (573 aa)) the chain is Extracellular. Residues Asn101 and Asn295 are each glycosylated (N-linked (GlcNAc...) asparagine). A helical membrane pass occupies residues 596-616 (VLVSLAISLSAFSAMILGLFI). The Cytoplasmic portion of the chain corresponds to 617–630 (CYRETPIVRANNRN). Residues 631-651 (LSYLLLISLKLCFSCSLMFIG) traverse the membrane as a helical segment. The Extracellular portion of the chain corresponds to 652 to 662 (QPRTVTCVLRQ). A helical membrane pass occupies residues 663 to 683 (IIFGIVFSIVISAILAKTFIV). The Cytoplasmic segment spans residues 684–706 (VMAFKAIKPGSILKMGMVTRLSN). Residues 707–727 (AIVCCGSIIQVCICAVWLGTY) form a helical membrane-spanning segment. The Extracellular segment spans residues 728 to 753 (PPFPDVDMHSEFGQIILWCNEGSTLA). A helical membrane pass occupies residues 754-774 (FYCVLGYLGFLASLSLLIAFL). Residues 775 to 786 (ARRLPDSFNEAK) lie on the Cytoplasmic side of the membrane. The helical transmembrane segment at 787–807 (TITFSMLVFCSVWISFVPAYL) threads the bilayer. Over 808 to 814 (SSKGKTM) the chain is Extracellular. Residues 815 to 835 (VAVEILSILASSAGLLGCIFL) form a helical membrane-spanning segment. Residues 836 to 855 (PKCYVILLKSGGHSRKKFFK) lie on the Cytoplasmic side of the membrane.

It belongs to the G-protein coupled receptor 3 family. In terms of tissue distribution, expressed in the basal epithelium of the vomeronasal organ. Located to vomeronasal sensory neurons that project their axons to six to ten glomeruli that reside in globally conserved areas within the caudal accessory olfactory bulb (AOB).

Its subcellular location is the cell membrane. Putative pheromone receptor. The sequence is that of Vomeronasal type-2 receptor 26 (Vmn2r26) from Mus musculus (Mouse).